The sequence spans 604 residues: BTB/POZ domain-containing protein SR1IP1 (604 aa).

A BTB domain is found at 27 to 96 (SDVTVHVGEA…CYGINFDMST (70 aa)). Positions 201–474 (DWWAEDLTVL…VQVLYYEQQR (274 aa)) constitute an NPH3 domain. Y415 carries the phosphotyrosine modification. Disordered stretches follow at residues 478-499 (EVTN…VLPP) and 532-604 (FEKE…HSIS). A coiled-coil region spans residues 500–541 (KLSSYTDELSKLKRENQDLKLELLKMKMKLKEFEKESEKKTS). A compositionally biased stretch (low complexity) spans 541-558 (SSSTISTNPSSPISTAST). A compositionally biased stretch (basic residues) spans 591 to 604 (GRTKPPKDRRHSIS).

Belongs to the NPH3 family. In terms of assembly, interacts with CAMTA3 and CUL3A.

The protein operates within protein modification; protein ubiquitination. Acts as a substrate-specific adapter of an E3 ubiquitin-protein ligase complex (CUL3-RBX1-BTB) which mediates the ubiquitination and subsequent proteasomal degradation of target proteins. Involved in disease resistance. Acts as a substrate adapter that recruits CAMTA3/SR1 for ubiquitination and degradation during pathogen infection. Acts as a positive regulator of plant defense by removing the defense suppressor CAMTA3/SR1. In Arabidopsis thaliana (Mouse-ear cress), this protein is BTB/POZ domain-containing protein SR1IP1.